The following is a 427-amino-acid chain: MFFTCGPNEAMVVSGFCRSPPVMVAGGRVFVLPCIQQIQRISLNTLTLNVKSEKVYTRHGVPISVTGIAQVKIQGQNKEMLAAACQMFLGKTEAEIAHIALETLEGHQRAIMAHMTVEEIYKDRQKFSEQVFKVASSDLVNMGISVVSYTLKDIHDDQDYLHSLGKARTAQVQKDARIGEAEAKRDAGIREAKAKQEKVSAQYLSEIEMAKAQRDYELKKAAYDIEVNTRRAQADLAYQLQVAKTKQQIEEQRVQVQVVERAQQVAVQEQEIARREKELEARVRKPAEAERYKLERLAEAEKSQLIMQAEAEAEAVRMRGEAEAFAIGARARAEAEQMAKKAEAFQLYQEAAQLDMLLEKLPQVAEEISGPLTSANKITLVSSGSGAMGAAKVTGEVLDILSRLPESVERLTGVSISQVNHKPLRTA.

A phosphoserine mark is found at serine 19, serine 163, and serine 385.

This sequence belongs to the band 7/mec-2 family. Flotillin subfamily. As to quaternary structure, heterooligomeric complex of flotillin-1 and flotillin-2 and caveolin-1 and caveolin-2. Interacts with ECPAS.

It localises to the cell membrane. It is found in the endosome. Its subcellular location is the membrane. The protein resides in the caveola. The protein localises to the melanosome. It localises to the membrane raft. May act as a scaffolding protein within caveolar membranes, functionally participating in formation of caveolae or caveolae-like vesicles. This is Flotillin-1 (FLOT1) from Bos taurus (Bovine).